The primary structure comprises 628 residues: Probable potassium transport system protein Kup (628 aa).

12 consecutive transmembrane segments (helical) span residues 12–32, 57–77, 106–126, 141–161, 174–194, 219–239, 253–273, 295–315, 343–363, 369–389, 402–422, and 425–445; these read ALPL…IGTS, LLSL…VMLV, WYLL…GVLT, ISPA…AAVF, FYGP…VYGI, LAGV…ALYA, WLFV…AILL, LLFL…TGVF, IYVG…VLGF, LASA…ILFV, AVIA…SANL, and LHEG…VMVS.

It belongs to the HAK/KUP transporter (TC 2.A.72) family.

It localises to the cell inner membrane. The catalysed reaction is K(+)(in) + H(+)(in) = K(+)(out) + H(+)(out). Its function is as follows. Transport of potassium into the cell. Likely operates as a K(+):H(+) symporter. The sequence is that of Probable potassium transport system protein Kup from Azorhizobium caulinodans (strain ATCC 43989 / DSM 5975 / JCM 20966 / LMG 6465 / NBRC 14845 / NCIMB 13405 / ORS 571).